The chain runs to 24 residues: Protein YsdE (24 aa).

In Escherichia coli (strain K12), this protein is Protein YsdE.